The primary structure comprises 213 residues: Protein-L-isoaspartate O-methyltransferase (213 aa).

Residue Ser61 is part of the active site.

This sequence belongs to the methyltransferase superfamily. L-isoaspartyl/D-aspartyl protein methyltransferase family.

It is found in the cytoplasm. It carries out the reaction [protein]-L-isoaspartate + S-adenosyl-L-methionine = [protein]-L-isoaspartate alpha-methyl ester + S-adenosyl-L-homocysteine. Its function is as follows. Catalyzes the methyl esterification of L-isoaspartyl residues in peptides and proteins that result from spontaneous decomposition of normal L-aspartyl and L-asparaginyl residues. It plays a role in the repair and/or degradation of damaged proteins. The polypeptide is Protein-L-isoaspartate O-methyltransferase (Maricaulis maris (strain MCS10) (Caulobacter maris)).